The sequence spans 409 residues: MHWGVGFASSRPCVVDLSWNQSISFFGWWAGSEEPFSFYGDIIAFPLQDYGGIMAGLGSDPWWKKTLYLTGGALLAAAAYLLHELLVIRKQQELDSKDAIILHQFARPNNGVPSLSPFCLKMETYLRMADLPYQNYFGGKLSAQGKMPWIEYNNEKVSGTEFIIDFLEEKLGVNLNKNLGPHERAVSRAVTKMVEEHFYWTLAYCQWVDNLNETRKMLSLSGGGPFSNLLRWVVCHITKGIVKREMHGHGIGRFSEEEIYMLMEKDMRSLAGLLGDKKYIMGPKLSTLDATVFGHLAQAMWTLPGTRPERLIKGELINLAMYCERIRRKFWPEWHHDDDNTIYESEESSEGSKTHTPMLDFSFYSRTETFEDEGAENSFSRTPDTDFTGHSLFDSDVDMDDYTEHEQCK.

The chain crosses the membrane as a helical span at residues 68–88 (YLTGGALLAAAAYLLHELLVI). Residues 372–409 (DEGAENSFSRTPDTDFTGHSLFDSDVDMDDYTEHEQCK) are disordered.

It belongs to the FAX family.

The protein localises to the membrane. Its function is as follows. May play a role in axonal development. The chain is Failed axon connections homolog (Faxc) from Rattus norvegicus (Rat).